The sequence spans 143 residues: Nucleoside diphosphate kinase (143 aa).

Positions 11, 59, 87, 93, 104, and 114 each coordinate ATP. Histidine 117 serves as the catalytic Pros-phosphohistidine intermediate.

Belongs to the NDK family. Homotetramer. It depends on Mg(2+) as a cofactor.

The protein resides in the cytoplasm. The enzyme catalyses a 2'-deoxyribonucleoside 5'-diphosphate + ATP = a 2'-deoxyribonucleoside 5'-triphosphate + ADP. It catalyses the reaction a ribonucleoside 5'-diphosphate + ATP = a ribonucleoside 5'-triphosphate + ADP. Functionally, major role in the synthesis of nucleoside triphosphates other than ATP. The ATP gamma phosphate is transferred to the NDP beta phosphate via a ping-pong mechanism, using a phosphorylated active-site intermediate. The sequence is that of Nucleoside diphosphate kinase from Shewanella frigidimarina (strain NCIMB 400).